Reading from the N-terminus, the 353-residue chain is Phosphate acyltransferase (353 aa).

Belongs to the PlsX family. As to quaternary structure, homodimer. Probably interacts with PlsY.

It localises to the cytoplasm. The enzyme catalyses a fatty acyl-[ACP] + phosphate = an acyl phosphate + holo-[ACP]. The protein operates within lipid metabolism; phospholipid metabolism. Catalyzes the reversible formation of acyl-phosphate (acyl-PO(4)) from acyl-[acyl-carrier-protein] (acyl-ACP). This enzyme utilizes acyl-ACP as fatty acyl donor, but not acyl-CoA. This chain is Phosphate acyltransferase, found in Rhodopseudomonas palustris (strain BisB5).